Reading from the N-terminus, the 301-residue chain is Cytidine deaminase 1 (301 aa).

2 consecutive CMP/dCMP-type deaminase domains span residues 23 to 156 and 188 to 301; these read SVIQ…FGPD and DSSA…CYEA. 64–66 provides a ligand contact to substrate; that stretch reads NVE. Histidine 77 lines the Zn(2+) pocket. Glutamate 79 serves as the catalytic Proton donor. 2 residues coordinate Zn(2+): cysteine 104 and cysteine 107.

It belongs to the cytidine and deoxycytidylate deaminase family. Homodimer. Requires Zn(2+) as cofactor. As to expression, expressed in roots, rosette leaves, stems and flowers.

It catalyses the reaction cytidine + H2O + H(+) = uridine + NH4(+). The catalysed reaction is 2'-deoxycytidine + H2O + H(+) = 2'-deoxyuridine + NH4(+). Its activity is regulated as follows. Inhibited by uridine, CMP and dCMP. In terms of biological role, this enzyme scavenges exogenous and endogenous cytidine and 2'-deoxycytidine for UMP synthesis. Functions as a conventional cytidine deaminase. Has no affinity for RNA and is not involved in RNA-editing by C-to-U deamination. This Arabidopsis thaliana (Mouse-ear cress) protein is Cytidine deaminase 1 (CDA1).